Here is a 342-residue protein sequence, read N- to C-terminus: uncharacterized protein (342 aa).

Arg69 provides a ligand contact to substrate. His176 serves as the catalytic Proton donor. Residue Asp240 participates in substrate binding.

Belongs to the aldose epimerase family.

This is an uncharacterized protein from Saccharomyces cerevisiae (strain ATCC 204508 / S288c) (Baker's yeast).